A 521-amino-acid polypeptide reads, in one-letter code: NAD(P)H-quinone oxidoreductase subunit 2 (521 aa).

The next 14 helical transmembrane spans lie at 16 to 36, 43 to 63, 80 to 100, 110 to 130, 133 to 153, 168 to 188, 211 to 231, 245 to 265, 279 to 299, 307 to 327, 335 to 355, 379 to 399, 401 to 421, and 467 to 487; these read ILPEGIVIITLMVVLIGDLIG, WLPYGAIAGLLAALFALYTAW, LSIVFRGIIALSTIVTLLMSI, LAEFIGIMLTATLGGMFLSGA, LVMIFISLEMLSISSYLMTGY, LLIGASSSAIFLYGSSLLYGL, LGLAIALVFVIAGIAFKISAV, PTPVVAFLSVGSKAAGFALAI, WHLIFTALAILSMVLGNVVAL, MLAYSSIGQAGFVMIGLTAGT, VFYLLVYLFMNLGAFSGVILF, LGLSLCLLSLGGIPPLAGFFG, IYLFWAGWQAELYGLVLLALV, and VGLVLSVIATSLAGILSNPLF.

The protein belongs to the complex I subunit 2 family. NDH-1 can be composed of about 15 different subunits; different subcomplexes with different compositions have been identified which probably have different functions.

It is found in the cellular thylakoid membrane. It carries out the reaction a plastoquinone + NADH + (n+1) H(+)(in) = a plastoquinol + NAD(+) + n H(+)(out). The catalysed reaction is a plastoquinone + NADPH + (n+1) H(+)(in) = a plastoquinol + NADP(+) + n H(+)(out). Functionally, NDH-1 shuttles electrons from an unknown electron donor, via FMN and iron-sulfur (Fe-S) centers, to quinones in the respiratory and/or the photosynthetic chain. The immediate electron acceptor for the enzyme in this species is believed to be plastoquinone. Couples the redox reaction to proton translocation, and thus conserves the redox energy in a proton gradient. Cyanobacterial NDH-1 also plays a role in inorganic carbon-concentration. This is NAD(P)H-quinone oxidoreductase subunit 2 from Crocosphaera subtropica (strain ATCC 51142 / BH68) (Cyanothece sp. (strain ATCC 51142)).